Consider the following 242-residue polypeptide: Probable transcriptional regulatory protein Bcep18194_A5621 (242 aa).

This sequence belongs to the TACO1 family.

It is found in the cytoplasm. The polypeptide is Probable transcriptional regulatory protein Bcep18194_A5621 (Burkholderia lata (strain ATCC 17760 / DSM 23089 / LMG 22485 / NCIMB 9086 / R18194 / 383)).